We begin with the raw amino-acid sequence, 246 residues long: UL16-binding protein 2 (246 aa).

The signal sequence occupies residues 1-25 (MAAAAATKILLCLPLLLLLSGWSRA). Positions 29–117 (DPHSLCYDIT…IQLENYTPKE (89 aa)) are MHC class I alpha-1 like. The cysteines at positions 50 and 66 are disulfide-linked. N-linked (GlcNAc...) asparagine glycosylation is found at asparagine 68 and asparagine 82. The segment at 118 to 210 (PLTLQARMSC…MDSTLEPSAG (93 aa)) is MHC class I alpha-2 like. Residues cysteine 127 and cysteine 190 are joined by a disulfide bond. Serine 216 is an a protein binding site. Serine 217 is lipidated: GPI-anchor amidated serine. A propeptide spans 218–246 (GTTQLRATATTLILCCLLIILPCFILPGI) (removed in mature form).

The protein belongs to the MHC class I family. As to quaternary structure, interacts with KLRK1/NKG2D. Does not bind to beta2-microglobulin. (Microbial infection) In CMV-infected cells, interacts with the viral glycoprotein UL16; this interaction causes ULBP2 retention in the endoplasmic reticulum and cis-Golgi and prevents binding to and activation of KLRK1/NKG2D, providing CMV with an immune evasion mechanism. Expressed in various types of cancer cell lines and in the fetus, but not in normal tissues.

Its subcellular location is the cell membrane. It localises to the endoplasmic reticulum. The protein localises to the secreted. Functionally, binds and activates the KLRK1/NKG2D receptor, mediating natural killer cell cytotoxicity. The chain is UL16-binding protein 2 from Homo sapiens (Human).